A 322-amino-acid polypeptide reads, in one-letter code: uncharacterized protein (322 aa).

Composition is skewed to basic residues over residues 1-16 (MPGN…KSGT) and 43-61 (LRPH…RRPV). Residues 1–69 (MPGNSRRRGA…PVKRADETET (69 aa)) are disordered. 3 residues coordinate S-adenosyl-L-methionine: glycine 261, isoleucine 281, and leucine 290.

This sequence belongs to the class IV-like SAM-binding methyltransferase superfamily. RNA methyltransferase TrmH family.

This is an uncharacterized protein from Mycobacterium tuberculosis (strain CDC 1551 / Oshkosh).